The primary structure comprises 612 residues: Glutamine--fructose-6-phosphate aminotransferase [isomerizing] (612 aa).

C2 serves as the catalytic Nucleophile; for GATase activity. The 218-residue stretch at 2 to 219 (CGIVGANSTR…EGDIAIISKD (218 aa)) folds into the Glutamine amidotransferase type-2 domain. SIS domains are found at residues 287 to 427 (AKEL…LKNS) and 460 to 602 (ISEY…VDQP). K607 acts as the For Fru-6P isomerization activity in catalysis.

In terms of assembly, homodimer.

Its subcellular location is the cytoplasm. It catalyses the reaction D-fructose 6-phosphate + L-glutamine = D-glucosamine 6-phosphate + L-glutamate. Functionally, catalyzes the first step in hexosamine metabolism, converting fructose-6P into glucosamine-6P using glutamine as a nitrogen source. In Francisella tularensis subsp. tularensis (strain SCHU S4 / Schu 4), this protein is Glutamine--fructose-6-phosphate aminotransferase [isomerizing].